We begin with the raw amino-acid sequence, 391 residues long: Homocysteine-responsive endoplasmic reticulum-resident ubiquitin-like domain member 1 protein (391 aa).

Methionine 1 carries the post-translational modification N-acetylmethionine. Topologically, residues 1-263 (MESETEPEPV…VEEDDEINRD (263 aa)) are cytoplasmic. One can recognise a Ubiquitin-like domain in the interval 10–72 (VTLLVKSPNQ…LLDHQCLRDL (63 aa)). The interval 100–126 (KVAESTEEPAGSNRGQYPEDSSSDGLR) is disordered. The span at 112–124 (NRGQYPEDSSSDG) shows a compositional bias: polar residues. Residues 115-200 (QYPEDSSSDG…ASGAFVPPPS (86 aa)) form an interaction with UBQLN1 region. Serine 135 carries the phosphoserine modification. The segment at 170-190 (LSWFQQIYARQYYMQYLAATA) is interaction with SYVN1. The chain crosses the membrane as a helical span at residues 264–284 (WLDWTYSAATFSVFLSILYFY). The Lumenal segment spans residues 285-289 (SSLSR). A helical transmembrane segment spans residues 290–310 (FLMVMGATVVMYLHHVGWFPF). Residues 311 to 391 (RPRPVQNFPN…LPEGPPAIAN (81 aa)) are Cytoplasmic-facing. Positions 318–359 (FPNDGPPPDVVNQDPNNNLQEGTDPETEDPNHLPPDRDVLDG) are disordered. The segment covering 346–357 (DPNHLPPDRDVL) has biased composition (basic and acidic residues).

In terms of assembly, interacts with PSEN1 and PSEN2. Interacts with UBXN6. Interacts with UBQLN1, UBQLN2 and UBQLN4. Component of the HRD1 complex, which comprises at least SYNV1/HRD1, FAM8A1, HERPUD1/HERP, OS9, SEL1L and UBE2J1. FAM8A1 binding to SYNV1 may promote recruitment of HERPUD1 to the HRD1 complex. In terms of tissue distribution, widely expressed; in the brain, expression seems to be restricted to neurons and vascular smooth muscle cells. Present in activated microglia in senile plaques in the brain of patients with Alzheimer disease.

The protein resides in the endoplasmic reticulum membrane. In terms of biological role, component of the endoplasmic reticulum quality control (ERQC) system also called ER-associated degradation (ERAD) involved in ubiquitin-dependent degradation of misfolded endoplasmic reticulum proteins. Could enhance presenilin-mediated amyloid-beta protein 40 generation. Binds to ubiquilins and this interaction is required for efficient degradation of CD3D via the ERAD pathway. In Homo sapiens (Human), this protein is Homocysteine-responsive endoplasmic reticulum-resident ubiquitin-like domain member 1 protein (HERPUD1).